Here is a 307-residue protein sequence, read N- to C-terminus: 3-ketodihydrosphingosine reductase TSC10 (307 aa).

Leu-11 lines the NADP(+) pocket. The NADPH site is built by Gly-14, Ser-16, and Gly-18. Residues 14 to 18 (GGSQG) carry the GXSXG motif. Leu-19 lines the NADP(+) pocket. The NADPH site is built by Arg-40, Lys-44, and Leu-74. Catalysis depends on Ser-147, which acts as the Proton donor. Tyr-161, Lys-165, and Ser-194 together coordinate NADP(+). Tyr-161 (proton acceptor) is an active-site residue. The active-site Lowers pKa of active site Tyr is Lys-165. A helical transmembrane segment spans residues 261–281 (YFLWPLGWLLGALVNLLVVPI).

Belongs to the short-chain dehydrogenases/reductases (SDR) family.

It is found in the endoplasmic reticulum membrane. It carries out the reaction sphinganine + NADP(+) = 3-oxosphinganine + NADPH + H(+). It functions in the pathway lipid metabolism; sphingolipid metabolism. Catalyzes the reduction of 3'-oxosphinganine (3-ketodihydrosphingosine/KDS) to sphinganine (dihydrosphingosine/DHS), the second step of de novo sphingolipid biosynthesis. This chain is 3-ketodihydrosphingosine reductase TSC10 (TSC10), found in Eremothecium gossypii (strain ATCC 10895 / CBS 109.51 / FGSC 9923 / NRRL Y-1056) (Yeast).